Consider the following 395-residue polypeptide: NAD(P)H-quinone oxidoreductase subunit H (395 aa).

Belongs to the complex I 49 kDa subunit family. In terms of assembly, NDH-1 can be composed of about 15 different subunits; different subcomplexes with different compositions have been identified which probably have different functions.

It is found in the cellular thylakoid membrane. The enzyme catalyses a plastoquinone + NADH + (n+1) H(+)(in) = a plastoquinol + NAD(+) + n H(+)(out). It carries out the reaction a plastoquinone + NADPH + (n+1) H(+)(in) = a plastoquinol + NADP(+) + n H(+)(out). Functionally, NDH-1 shuttles electrons from an unknown electron donor, via FMN and iron-sulfur (Fe-S) centers, to quinones in the respiratory and/or the photosynthetic chain. The immediate electron acceptor for the enzyme in this species is believed to be plastoquinone. Couples the redox reaction to proton translocation, and thus conserves the redox energy in a proton gradient. Cyanobacterial NDH-1 also plays a role in inorganic carbon-concentration. The sequence is that of NAD(P)H-quinone oxidoreductase subunit H from Prochlorococcus marinus (strain MIT 9301).